The primary structure comprises 307 residues: Ribonuclease Z (307 aa).

Zn(2+) is bound by residues H63, H65, D67, H68, H141, D212, and H270. The Proton acceptor role is filled by D67.

It belongs to the RNase Z family. In terms of assembly, homodimer. The cofactor is Zn(2+).

The enzyme catalyses Endonucleolytic cleavage of RNA, removing extra 3' nucleotides from tRNA precursor, generating 3' termini of tRNAs. A 3'-hydroxy group is left at the tRNA terminus and a 5'-phosphoryl group is left at the trailer molecule.. In terms of biological role, zinc phosphodiesterase, which displays some tRNA 3'-processing endonuclease activity. Probably involved in tRNA maturation, by removing a 3'-trailer from precursor tRNA. The chain is Ribonuclease Z from Bacillus thuringiensis subsp. konkukian (strain 97-27).